Here is a 464-residue protein sequence, read N- to C-terminus: ATP synthase subunit beta (464 aa).

151-158 (GGAGVGKT) contacts ATP.

This sequence belongs to the ATPase alpha/beta chains family. In terms of assembly, F-type ATPases have 2 components, CF(1) - the catalytic core - and CF(0) - the membrane proton channel. CF(1) has five subunits: alpha(3), beta(3), gamma(1), delta(1), epsilon(1). CF(0) has three main subunits: a(1), b(2) and c(9-12). The alpha and beta chains form an alternating ring which encloses part of the gamma chain. CF(1) is attached to CF(0) by a central stalk formed by the gamma and epsilon chains, while a peripheral stalk is formed by the delta and b chains.

The protein localises to the cell membrane. It catalyses the reaction ATP + H2O + 4 H(+)(in) = ADP + phosphate + 5 H(+)(out). In terms of biological role, produces ATP from ADP in the presence of a proton gradient across the membrane. The catalytic sites are hosted primarily by the beta subunits. The polypeptide is ATP synthase subunit beta (Bacillus cytotoxicus (strain DSM 22905 / CIP 110041 / 391-98 / NVH 391-98)).